A 387-amino-acid chain; its full sequence is D(4) dopamine receptor (387 aa).

Residues 1–34 are Extracellular-facing; that stretch reads MGNSSATEDGGLLAGRGPESLGTGAGLGGAGAAA. The N-linked (GlcNAc...) asparagine glycan is linked to asparagine 3. A helical membrane pass occupies residues 35 to 57; that stretch reads LVGGVLLIGLVLAGNSLVCVSVA. The Cytoplasmic portion of the chain corresponds to 58–67; sequence SERTLQTPTN. Residues 68–90 form a helical membrane-spanning segment; that stretch reads YFIVSLAAADLLLAVLVLPLFVY. Position 77 (aspartate 77) interacts with Na(+). At 91 to 106 the chain is on the extracellular side; that stretch reads SEVQGGVWLLSPRLCD. A disulfide bridge links cysteine 105 with cysteine 180. Residues 107–128 form a helical membrane-spanning segment; sequence TLMAMDVMLCTASIFNLCAISV. Residue serine 119 coordinates Na(+). Residues 129–146 lie on the Cytoplasmic side of the membrane; the sequence is DRFVAVTVPLRYNQQGQC. The chain crosses the membrane as a helical span at residues 147–170; it reads QLLLIAATWLLSAAVASPVVCGLN. At 171 to 186 the chain is on the extracellular side; sequence DVPGRDPAVCCLENRD. A helical transmembrane segment spans residues 187–208; sequence YVVYSSVCSFFLPCPLMLLLYW. Residues 209–314 are Cytoplasmic-facing; the sequence is ATFRGLRRWE…ITGRERKAMR (106 aa). Disordered regions lie at residues 224–247 and 287–306; these read KLHS…TQGP and AALP…AKIT. A helical membrane pass occupies residues 315 to 337; it reads VLPVVVGAFLVCWTPFFVVHITR. Residues 338–346 lie on the Extracellular side of the membrane; the sequence is ALCPACFVS. A disulfide bridge links cysteine 340 with cysteine 343. A helical membrane pass occupies residues 347-369; the sequence is PRLVSAVTWLGYVNSALNPIIYT. Topologically, residues 370-387 are cytoplasmic; the sequence is IFNAEFRSVFRKTLRLRC. Residue cysteine 387 is the site of S-palmitoyl cysteine attachment.

It belongs to the G-protein coupled receptor 1 family. In terms of assembly, forms homo- and heterooligomers with DRD2. D4.7 allele exhibits higher affinity for homodimers compared to DRD2 heterodimers, while alleles D42. and 4.4 have similar affinities for both. The interaction with DRD2 may modulate agonist-induced downstream signaling. Interacts with CLIC6. Interacts with GPRASP1. May interact with ADORA2A. Interacts with KLHL12. Post-translationally, palmitoylated. Palmitoylation of the C-terminal Cys is important for normal expression at the cell membrane. Detected in olfactory bulb, hypothalamus, olfactory tubercle, brainstem and striatum.

The protein resides in the cell membrane. In terms of biological role, dopamine receptor responsible for neuronal signaling in the mesolimbic system of the brain, an area of the brain that regulates emotion and complex behavior. Activated by dopamine, but also by epinephrine and norepinephrine, and by numerous synthetic agonists and drugs. Agonist binding triggers signaling via G proteins that inhibit adenylyl cyclase. Modulates the circadian rhythm of contrast sensitivity by regulating the rhythmic expression of NPAS2 in the retinal ganglion cells. The polypeptide is D(4) dopamine receptor (Drd4) (Mus musculus (Mouse)).